The chain runs to 563 residues: Arginine--tRNA ligase (563 aa).

Positions 122–132 match the 'HIGH' region motif; sequence PNIAKPMSMGH.

The protein belongs to the class-I aminoacyl-tRNA synthetase family. In terms of assembly, monomer.

Its subcellular location is the cytoplasm. The enzyme catalyses tRNA(Arg) + L-arginine + ATP = L-arginyl-tRNA(Arg) + AMP + diphosphate. In Ligilactobacillus salivarius (strain UCC118) (Lactobacillus salivarius), this protein is Arginine--tRNA ligase.